The following is a 157-amino-acid chain: MGFPKVERLLINYKTLDEFKKFKGCGAQELSMLEELQANIIENDSESPFYGIYYGGSLIARMSLYMKRNGGEPFEITGPYLELYKLEVLPTFQKQGFGQMLVNHAKQMQFPIKTIARIHSAGFWDKLNFTPVSVTDGDFYIWHPETNLNAVTNEESA.

One can recognise an N-acetyltransferase domain in the interval 9-154 (LLINYKTLDE…ETNLNAVTNE (146 aa)).

This is an uncharacterized protein from Bacillus cereus (strain B4264).